The sequence spans 501 residues: Aldehyde dehydrogenase, cytosolic 1 (501 aa).

An NAD(+)-binding site is contributed by 246–251 (GSTEVG). Catalysis depends on glutamate 269, which acts as the Proton acceptor. The active-site Nucleophile is the cysteine 303.

Belongs to the aldehyde dehydrogenase family. In terms of assembly, homotetramer. In terms of tissue distribution, eye specific, with very high expression in the lens.

The protein resides in the cytoplasm. It carries out the reaction an aldehyde + NAD(+) + H2O = a carboxylate + NADH + 2 H(+). It participates in alcohol metabolism; ethanol degradation; acetate from ethanol: step 2/2. In terms of biological role, major component of the eye of elephant shrews, which in contrast to other mammals, possesses both a lens- and a non-lens class-1 aldehyde dehydrogenase 1. This eye-specific form is a structural protein of the lens and, in other part of the eye, serves as the major form of ALDH1. Can convert/oxidize retinaldehyde to retinoic acid. This chain is Aldehyde dehydrogenase, cytosolic 1 (ALDH1), found in Elephantulus edwardii (Cape long-eared elephant shrew).